A 158-amino-acid chain; its full sequence is Cyclic pyranopterin monophosphate synthase (158 aa).

Residues 75-77 and 113-114 contribute to the substrate site; these read LCH and ME. Asp128 is an active-site residue.

This sequence belongs to the MoaC family. In terms of assembly, homohexamer; trimer of dimers.

The enzyme catalyses (8S)-3',8-cyclo-7,8-dihydroguanosine 5'-triphosphate = cyclic pyranopterin phosphate + diphosphate. Its pathway is cofactor biosynthesis; molybdopterin biosynthesis. Functionally, catalyzes the conversion of (8S)-3',8-cyclo-7,8-dihydroguanosine 5'-triphosphate to cyclic pyranopterin monophosphate (cPMP). The chain is Cyclic pyranopterin monophosphate synthase from Ralstonia pickettii (strain 12J).